The sequence spans 141 residues: Hemoglobin subunit alpha-D (141 aa).

Residues 1–141 (VLTGEDKKHV…VAAVLAEKYR (141 aa)) enclose the Globin domain. Heme b contacts are provided by histidine 58 and histidine 87.

It belongs to the globin family. In terms of assembly, heterotetramer of two alpha-D chains and two beta chains. In terms of tissue distribution, red blood cells.

Its function is as follows. Involved in oxygen transport from the lung to the various peripheral tissues. The polypeptide is Hemoglobin subunit alpha-D (HBAD) (Turdus merula (Common blackbird)).